Reading from the N-terminus, the 111-residue chain is CRIB domain-containing protein RIC2 (111 aa).

In terms of domain architecture, CRIB spans 71–84 (IGFPTDVKHLSHIG).

In terms of assembly, interacts with ARAC11/ROP1. In terms of tissue distribution, expressed in roots, leaves, stems, flowers, siliques and pollen.

Its subcellular location is the cell membrane. In terms of biological role, functions as a downstream effector of Rho-related GTP binding proteins of the 'Rho of Plants' (ROPs) family. Participates in the propagation of ROP GTPase signals in specific cellular responses. Is involved in pollen tube growth regulation through its interaction with ARAC11/ROP1. This chain is CRIB domain-containing protein RIC2 (RIC2), found in Arabidopsis thaliana (Mouse-ear cress).